A 445-amino-acid polypeptide reads, in one-letter code: Ribulose bisphosphate carboxylase large chain (445 aa).

Substrate contacts are provided by asparagine 89 and threonine 139. The active-site Proton acceptor is the lysine 141. Lysine 143 provides a ligand contact to substrate. Mg(2+)-binding residues include lysine 167, aspartate 169, and glutamate 170. Position 167 is an N6-carboxylysine (lysine 167). Histidine 260 (proton acceptor) is an active-site residue. Residues arginine 261, histidine 293, and serine 345 each contribute to the substrate site.

Belongs to the RuBisCO large chain family. Type I subfamily. In terms of assembly, heterohexadecamer of 8 large chains and 8 small chains; disulfide-linked. The disulfide link is formed within the large subunit homodimers. Requires Mg(2+) as cofactor. Post-translationally, the disulfide bond which can form in the large chain dimeric partners within the hexadecamer appears to be associated with oxidative stress and protein turnover.

It localises to the plastid. The protein resides in the chloroplast. It carries out the reaction 2 (2R)-3-phosphoglycerate + 2 H(+) = D-ribulose 1,5-bisphosphate + CO2 + H2O. It catalyses the reaction D-ribulose 1,5-bisphosphate + O2 = 2-phosphoglycolate + (2R)-3-phosphoglycerate + 2 H(+). RuBisCO catalyzes two reactions: the carboxylation of D-ribulose 1,5-bisphosphate, the primary event in carbon dioxide fixation, as well as the oxidative fragmentation of the pentose substrate in the photorespiration process. Both reactions occur simultaneously and in competition at the same active site. This is Ribulose bisphosphate carboxylase large chain from Callicarpa dichotoma (Purple beautyberry).